A 146-amino-acid chain; its full sequence is VHWTAEEKHLLGSLWAKVDVADIGGEALGRLLVVYPWTQRFFADFGNLSSATAICGNPRVKAHGKKVFTMFGEALKHLDNLKETFASLSELHCDKLHVDTENFKLLGNLVIVVLAARLHDSFTPAAQAAFHKLAYSVAHALARRYH.

Residues 2–146 form the Globin domain; the sequence is HWTAEEKHLL…VAHALARRYH (145 aa). Heme b contacts are provided by H63 and H92.

Belongs to the globin family. There are three forms of hemoglobin in Sphenodon: A, A' and D. Hb A is a tetramer of two alpha-A and two beta-1, Hb A' is a tetramer of two alpha-a and two beta-2, Hb D is a tetramer of two alpha-D and two beta-2.

Involved in oxygen transport from the lung to the various peripheral tissues. The chain is Hemoglobin subunit beta-1 (HBB1) from Sphenodon punctatus (Tuatara).